Reading from the N-terminus, the 267-residue chain is Methylglyoxal reductase DkgB (267 aa).

Tyr-39 serves as the catalytic Proton donor. His-97 is a binding site for substrate. 179–231 (MTLAYGKALKDEVIARIAAKHNATPAQVILAWAMGEGYSVIPSSTRRENLASS) provides a ligand contact to NADP(+).

It belongs to the aldo/keto reductase family. Monomer.

Its subcellular location is the cytoplasm. It catalyses the reaction hydroxyacetone + NADP(+) = methylglyoxal + NADPH + H(+). Its function is as follows. Aldo-keto reductase that significantly contributes to cellular methylglyoxal detoxification by catalyzing the NADPH-dependent conversion of methylglyoxal to acetol. This Salmonella typhimurium (strain LT2 / SGSC1412 / ATCC 700720) protein is Methylglyoxal reductase DkgB.